The chain runs to 239 residues: Non-classical arabinogalactan protein 30 (239 aa).

A signal peptide spans 1 to 24 (MGIIGKSVSLTLFALLCFTSSVFT). Asn-106 carries an N-linked (GlcNAc...) asparagine glycan.

It belongs to the non-classical AGP family. In terms of tissue distribution, specifically expressed in root tips.

It is found in the secreted. The protein localises to the cell wall. Functionally, proteoglycan required for the timing of seed germination. May function in the abscisic acid (ABA) response. This is Non-classical arabinogalactan protein 30 from Arabidopsis thaliana (Mouse-ear cress).